A 101-amino-acid polypeptide reads, in one-letter code: NADH-quinone oxidoreductase subunit K (101 aa).

Transmembrane regions (helical) follow at residues 4–24, 30–50, and 62–82; these read LGHM…GIFL, IVLL…FVGF, and FVFF…AILV.

Belongs to the complex I subunit 4L family. In terms of assembly, NDH-1 is composed of 14 different subunits. Subunits NuoA, H, J, K, L, M, N constitute the membrane sector of the complex.

Its subcellular location is the cell inner membrane. The enzyme catalyses a quinone + NADH + 5 H(+)(in) = a quinol + NAD(+) + 4 H(+)(out). In terms of biological role, NDH-1 shuttles electrons from NADH, via FMN and iron-sulfur (Fe-S) centers, to quinones in the respiratory chain. The immediate electron acceptor for the enzyme in this species is believed to be ubiquinone. Couples the redox reaction to proton translocation (for every two electrons transferred, four hydrogen ions are translocated across the cytoplasmic membrane), and thus conserves the redox energy in a proton gradient. This is NADH-quinone oxidoreductase subunit K from Stenotrophomonas maltophilia (strain K279a).